We begin with the raw amino-acid sequence, 265 residues long: tRNA pseudouridine synthase A (265 aa).

Residue D58 is the Nucleophile of the active site. Y116 is a binding site for substrate.

This sequence belongs to the tRNA pseudouridine synthase TruA family. In terms of assembly, homodimer.

The enzyme catalyses uridine(38/39/40) in tRNA = pseudouridine(38/39/40) in tRNA. In terms of biological role, formation of pseudouridine at positions 38, 39 and 40 in the anticodon stem and loop of transfer RNAs. The chain is tRNA pseudouridine synthase A from Neisseria meningitidis serogroup B (strain ATCC BAA-335 / MC58).